Reading from the N-terminus, the 252-residue chain is Ubiquinone biosynthesis O-methyltransferase (252 aa).

S-adenosyl-L-methionine-binding residues include Arg-36, Gly-60, Asp-81, and Leu-123.

This sequence belongs to the methyltransferase superfamily. UbiG/COQ3 family.

The enzyme catalyses a 3-demethylubiquinol + S-adenosyl-L-methionine = a ubiquinol + S-adenosyl-L-homocysteine + H(+). It catalyses the reaction a 3-(all-trans-polyprenyl)benzene-1,2-diol + S-adenosyl-L-methionine = a 2-methoxy-6-(all-trans-polyprenyl)phenol + S-adenosyl-L-homocysteine + H(+). Its pathway is cofactor biosynthesis; ubiquinone biosynthesis. O-methyltransferase that catalyzes the 2 O-methylation steps in the ubiquinone biosynthetic pathway. The polypeptide is Ubiquinone biosynthesis O-methyltransferase (Rickettsia prowazekii (strain Madrid E)).